The following is a 386-amino-acid chain: Histidine decarboxylase (386 aa).

Histidine 120 is a substrate binding site. Lysine 233 bears the N6-(pyridoxal phosphate)lysine mark.

The protein belongs to the group II decarboxylase family. Homotetramer. Requires pyridoxal 5'-phosphate as cofactor.

The enzyme catalyses L-histidine + H(+) = histamine + CO2. It functions in the pathway siderophore biosynthesis; anguibactin biosynthesis. The sequence is that of Histidine decarboxylase from Vibrio anguillarum (strain ATCC 68554 / 775) (Listonella anguillarum).